Consider the following 290-residue polypeptide: NH(3)-dependent NAD(+) synthetase (290 aa).

33-40 serves as a coordination point for ATP; that stretch reads GVSGGVDS. Aspartate 39 provides a ligand contact to Mg(2+). Residue arginine 154 coordinates deamido-NAD(+). Residue threonine 174 participates in ATP binding. Residue glutamate 179 participates in Mg(2+) binding. Positions 187 and 194 each coordinate deamido-NAD(+). 2 residues coordinate ATP: lysine 203 and serine 225.

This sequence belongs to the NAD synthetase family. Homodimer.

The enzyme catalyses deamido-NAD(+) + NH4(+) + ATP = AMP + diphosphate + NAD(+) + H(+). The protein operates within cofactor biosynthesis; NAD(+) biosynthesis; NAD(+) from deamido-NAD(+) (ammonia route): step 1/1. Catalyzes the ATP-dependent amidation of deamido-NAD to form NAD. Uses ammonia as a nitrogen source. In Thermotoga neapolitana (strain ATCC 49049 / DSM 4359 / NBRC 107923 / NS-E), this protein is NH(3)-dependent NAD(+) synthetase.